Consider the following 404-residue polypeptide: Probable tRNA sulfurtransferase (404 aa).

Positions 60-165 (HEVAESLKEI…DEAAYISYEN (106 aa)) constitute a THUMP domain. Residues 183–184 (ML), 208–209 (HF), Arg-265, Gly-287, and Gln-296 contribute to the ATP site.

This sequence belongs to the ThiI family.

The protein resides in the cytoplasm. The catalysed reaction is [ThiI sulfur-carrier protein]-S-sulfanyl-L-cysteine + a uridine in tRNA + 2 reduced [2Fe-2S]-[ferredoxin] + ATP + H(+) = [ThiI sulfur-carrier protein]-L-cysteine + a 4-thiouridine in tRNA + 2 oxidized [2Fe-2S]-[ferredoxin] + AMP + diphosphate. It carries out the reaction [ThiS sulfur-carrier protein]-C-terminal Gly-Gly-AMP + S-sulfanyl-L-cysteinyl-[cysteine desulfurase] + AH2 = [ThiS sulfur-carrier protein]-C-terminal-Gly-aminoethanethioate + L-cysteinyl-[cysteine desulfurase] + A + AMP + 2 H(+). It participates in cofactor biosynthesis; thiamine diphosphate biosynthesis. Functionally, catalyzes the ATP-dependent transfer of a sulfur to tRNA to produce 4-thiouridine in position 8 of tRNAs, which functions as a near-UV photosensor. Also catalyzes the transfer of sulfur to the sulfur carrier protein ThiS, forming ThiS-thiocarboxylate. This is a step in the synthesis of thiazole, in the thiamine biosynthesis pathway. The sulfur is donated as persulfide by IscS. The protein is Probable tRNA sulfurtransferase of Streptococcus agalactiae serotype III (strain NEM316).